The primary structure comprises 110 residues: T cell receptor alpha variable 22 (110 aa).

Residues 1–21 form the signal peptide; the sequence is MKRILGALLGLLSAQVCCVRG. Residues 22–110 form the Ig-like domain; that stretch reads IQVEQSPPDL…DSGVYFCAVE (89 aa). Residues Asn38 and Asn44 are each glycosylated (N-linked (GlcNAc...) asparagine). Residues Cys43 and Cys107 are joined by a disulfide bond.

In terms of assembly, alpha-beta TR is a heterodimer composed of an alpha and beta chain; disulfide-linked. The alpha-beta TR is associated with the transmembrane signaling CD3 coreceptor proteins to form the TR-CD3 (TcR or TCR). The assembly of alpha-beta TR heterodimers with CD3 occurs in the endoplasmic reticulum where a single alpha-beta TR heterodimer associates with one CD3D-CD3E heterodimer, one CD3G-CD3E heterodimer and one CD247 homodimer forming a stable octameric structure. CD3D-CD3E and CD3G-CD3E heterodimers preferentially associate with TR alpha and TR beta chains, respectively. The association of the CD247 homodimer is the last step of TcR assembly in the endoplasmic reticulum and is required for transport to the cell surface.

It is found in the cell membrane. Functionally, v region of the variable domain of T cell receptor (TR) alpha chain that participates in the antigen recognition. Alpha-beta T cell receptors are antigen specific receptors which are essential to the immune response and are present on the cell surface of T lymphocytes. Recognize peptide-major histocompatibility (MH) (pMH) complexes that are displayed by antigen presenting cells (APC), a prerequisite for efficient T cell adaptive immunity against pathogens. Binding of alpha-beta TR to pMH complex initiates TR-CD3 clustering on the cell surface and intracellular activation of LCK that phosphorylates the ITAM motifs of CD3G, CD3D, CD3E and CD247 enabling the recruitment of ZAP70. In turn ZAP70 phosphorylates LAT, which recruits numerous signaling molecules to form the LAT signalosome. The LAT signalosome propagates signal branching to three major signaling pathways, the calcium, the mitogen-activated protein kinase (MAPK) kinase and the nuclear factor NF-kappa-B (NF-kB) pathways, leading to the mobilization of transcription factors that are critical for gene expression and essential for T cell growth and differentiation. The T cell repertoire is generated in the thymus, by V-(D)-J rearrangement. This repertoire is then shaped by intrathymic selection events to generate a peripheral T cell pool of self-MH restricted, non-autoaggressive T cells. Post-thymic interaction of alpha-beta TR with the pMH complexes shapes TR structural and functional avidity. This is T cell receptor alpha variable 22 from Homo sapiens (Human).